The primary structure comprises 1393 residues: DNA-directed RNA polymerase subunit beta' (1393 aa).

Zn(2+)-binding residues include C71, C73, C86, and C89. The Mg(2+) site is built by D462, D464, and D466. Positions 811, 885, 892, and 895 each coordinate Zn(2+).

The protein belongs to the RNA polymerase beta' chain family. In terms of assembly, the RNAP catalytic core consists of 2 alpha, 1 beta, 1 beta' and 1 omega subunit. When a sigma factor is associated with the core the holoenzyme is formed, which can initiate transcription. Mg(2+) serves as cofactor. It depends on Zn(2+) as a cofactor.

The catalysed reaction is RNA(n) + a ribonucleoside 5'-triphosphate = RNA(n+1) + diphosphate. In terms of biological role, DNA-dependent RNA polymerase catalyzes the transcription of DNA into RNA using the four ribonucleoside triphosphates as substrates. The polypeptide is DNA-directed RNA polymerase subunit beta' (Azorhizobium caulinodans (strain ATCC 43989 / DSM 5975 / JCM 20966 / LMG 6465 / NBRC 14845 / NCIMB 13405 / ORS 571)).